We begin with the raw amino-acid sequence, 514 residues long: Na(+)/H(+) antiporter NhaB (514 aa).

11 helical membrane passes run 13–33 (FMGNSPDWYKLAIITFLIINP), 34–54 (LIFFFVDPFIAGWLLVVEFIF), 96–116 (VILLLVFMVAGIYFMKQLLLF), 136–156 (CFASAFLSAFLDALTVIAVVI), 203–223 (LMMHAGVGTALGGVMTMVGEP), 236–256 (FVTFFIRMSPVTIPVFFAGLA), 304–324 (ALIGIWLIVALALHLAEVGII), 349–369 (EEALPFTALLTVFFSVVAVII), 392–412 (LFYLFNGLLSAISDNVFVGTV), 448–468 (ATPNGQAAFLFLLTSALSPLI), and 479–499 (ALPYTIVMTLLGLLAVEFWLV).

This sequence belongs to the NhaB Na(+)/H(+) (TC 2.A.34) antiporter family.

The protein resides in the cell inner membrane. It catalyses the reaction 2 Na(+)(in) + 3 H(+)(out) = 2 Na(+)(out) + 3 H(+)(in). Functionally, na(+)/H(+) antiporter that extrudes sodium in exchange for external protons. This chain is Na(+)/H(+) antiporter NhaB, found in Proteus mirabilis (strain HI4320).